The chain runs to 148 residues: uncharacterized protein (148 aa).

An HTH asnC-type domain is found at 2–63 (LDELDKRILY…LINPFKAGYE (62 aa)). The H-T-H motif DNA-binding region spans 21–40 (YSEIARILGVPESTVRVRVK).

This is an uncharacterized protein from Pyrococcus furiosus (strain ATCC 43587 / DSM 3638 / JCM 8422 / Vc1).